Consider the following 539-residue polypeptide: Glucans biosynthesis protein D (539 aa).

Positions M1–A29 form a signal peptide, tat-type signal.

The protein belongs to the OpgD/OpgG family. Post-translationally, predicted to be exported by the Tat system. The position of the signal peptide cleavage has not been experimentally proven.

The protein localises to the periplasm. Its pathway is glycan metabolism; osmoregulated periplasmic glucan (OPG) biosynthesis. Probably involved in the control of the structural glucose backbone of osmoregulated periplasmic glucans (OPGs). This chain is Glucans biosynthesis protein D, found in Pseudomonas savastanoi pv. phaseolicola (strain 1448A / Race 6) (Pseudomonas syringae pv. phaseolicola (strain 1448A / Race 6)).